A 362-amino-acid chain; its full sequence is Porin Omp2b (362 aa).

The N-terminal stretch at Met1–Ala22 is a signal peptide.

Belongs to the alphaproteobacteria porin family. As to quaternary structure, homotrimer.

It is found in the cell outer membrane. Forms passive diffusion pores that allow small molecular weight hydrophilic materials across the outer membrane. This chain is Porin Omp2b (omp2b), found in Brucella abortus (strain S19).